The sequence spans 348 residues: Mannonate dehydratase (348 aa).

It belongs to the mannonate dehydratase family. The cofactor is Fe(2+). Mn(2+) serves as cofactor.

It catalyses the reaction D-mannonate = 2-dehydro-3-deoxy-D-gluconate + H2O. Its pathway is carbohydrate metabolism; pentose and glucuronate interconversion. Functionally, catalyzes the dehydration of D-mannonate. This is Mannonate dehydratase from Streptococcus agalactiae serotype III (strain NEM316).